Here is a 238-residue protein sequence, read N- to C-terminus: Large ribosomal subunit protein uL2 (238 aa).

The disordered stretch occupies residues 199–238; it reads PHGGGLHQSVSRPSTVSRNAPPGRKVGHIAARRTGRKEGA. Polar residues predominate over residues 206-216; that stretch reads QSVSRPSTVSR. Basic residues predominate over residues 223–238; the sequence is KVGHIAARRTGRKEGA.

This sequence belongs to the universal ribosomal protein uL2 family. Part of the 50S ribosomal subunit. Forms a bridge to the 30S subunit in the 70S ribosome.

Its function is as follows. One of the primary rRNA binding proteins. Required for association of the 30S and 50S subunits to form the 70S ribosome, for tRNA binding and peptide bond formation. It has been suggested to have peptidyltransferase activity; this is somewhat controversial. Makes several contacts with the 16S rRNA in the 70S ribosome. This Sulfurisphaera tokodaii (strain DSM 16993 / JCM 10545 / NBRC 100140 / 7) (Sulfolobus tokodaii) protein is Large ribosomal subunit protein uL2.